The sequence spans 620 residues: Chaperone protein HscA homolog (620 aa).

The protein belongs to the heat shock protein 70 family.

Its function is as follows. Chaperone involved in the maturation of iron-sulfur cluster-containing proteins. Has a low intrinsic ATPase activity which is markedly stimulated by HscB. The sequence is that of Chaperone protein HscA homolog from Pseudomonas fluorescens (strain ATCC BAA-477 / NRRL B-23932 / Pf-5).